The chain runs to 325 residues: Methionine import ATP-binding protein MetN 3 (325 aa).

The ABC transporter domain occupies 2 to 239; sequence IEVQQLCKVY…PQSALGRALL (238 aa). Residue 36 to 43 coordinates ATP; sequence GRSGAGKS.

This sequence belongs to the ABC transporter superfamily. Methionine importer (TC 3.A.1.24) family. The complex is composed of two ATP-binding proteins (MetN), two transmembrane proteins (MetI) and a solute-binding protein (MetQ).

The protein resides in the cell inner membrane. The enzyme catalyses L-methionine(out) + ATP + H2O = L-methionine(in) + ADP + phosphate + H(+). The catalysed reaction is D-methionine(out) + ATP + H2O = D-methionine(in) + ADP + phosphate + H(+). In terms of biological role, part of the ABC transporter complex MetNIQ involved in methionine import. Responsible for energy coupling to the transport system. This Pseudomonas fluorescens (strain ATCC BAA-477 / NRRL B-23932 / Pf-5) protein is Methionine import ATP-binding protein MetN 3.